A 242-amino-acid polypeptide reads, in one-letter code: Uridylate kinase (242 aa).

ATP is bound at residue 11-14 (KLSG). Residues 19 to 24 (GDKGVG) are involved in allosteric activation by GTP. Gly-53 contributes to the UMP binding site. ATP contacts are provided by Gly-54 and Arg-58. Residues Asp-73 and 134-141 (IGSPYFST) each bind UMP. 3 residues coordinate ATP: Asn-162, Tyr-168, and Asp-171.

Belongs to the UMP kinase family. Homohexamer.

The protein localises to the cytoplasm. It carries out the reaction UMP + ATP = UDP + ADP. It functions in the pathway pyrimidine metabolism; CTP biosynthesis via de novo pathway; UDP from UMP (UMPK route): step 1/1. Allosterically activated by GTP. Inhibited by UTP. Functionally, catalyzes the reversible phosphorylation of UMP to UDP. This chain is Uridylate kinase, found in Streptococcus agalactiae serotype Ia (strain ATCC 27591 / A909 / CDC SS700).